We begin with the raw amino-acid sequence, 339 residues long: Ribosomal RNA small subunit methyltransferase C (339 aa).

It belongs to the methyltransferase superfamily. RsmC family. Monomer.

The protein resides in the cytoplasm. It catalyses the reaction guanosine(1207) in 16S rRNA + S-adenosyl-L-methionine = N(2)-methylguanosine(1207) in 16S rRNA + S-adenosyl-L-homocysteine + H(+). Functionally, specifically methylates the guanine in position 1207 of 16S rRNA in the 30S particle. The protein is Ribosomal RNA small subunit methyltransferase C of Aliivibrio fischeri (strain MJ11) (Vibrio fischeri).